The chain runs to 501 residues: Probable cytochrome P450 508A4 (501 aa).

The helical transmembrane segment at Met-1–Tyr-21 threads the bilayer. Position 445 (Cys-445) interacts with heme.

It belongs to the cytochrome P450 family. It depends on heme as a cofactor.

The protein resides in the membrane. The protein is Probable cytochrome P450 508A4 (cyp508A4) of Dictyostelium discoideum (Social amoeba).